The following is a 343-amino-acid chain: MSAFTPASEVLLRHSDDFEQSRILFAGDLQDDLPARLDTAASRAHTQQFHHWQVLSRQMGDNARFSLVATANDVADCDTLIYYWPKNKPEAQFQLMNLLSLLPVGTDIFVVGENRSGVRSAEQMLADYAPLNKVDSARRCGLYFGRLEKQPVFDANKFWGEYNVDGLTVKTLPGVFSRDGLDVGSQLLLSTLTPHTKGKVLDVGCGAGVLSVAFARHSPKIRLTLCDVSAPAVEASRATLAANGIEGEVFASNVFSEVKGRFDMIISNPPFHDGMQTSLDAAQTLIRGAVRHLNSGGELRIVANAFLPYPDVLDETFGFHEVIAQTGRFKVYRAIMTRQAKKG.

This sequence belongs to the methyltransferase superfamily. RsmC family. Monomer.

Its subcellular location is the cytoplasm. It carries out the reaction guanosine(1207) in 16S rRNA + S-adenosyl-L-methionine = N(2)-methylguanosine(1207) in 16S rRNA + S-adenosyl-L-homocysteine + H(+). Specifically methylates the guanine in position 1207 of 16S rRNA in the 30S particle. In Escherichia coli (strain SMS-3-5 / SECEC), this protein is Ribosomal RNA small subunit methyltransferase C.